An 87-amino-acid polypeptide reads, in one-letter code: Long neurotoxin LlLong (87 aa).

An N-terminal signal peptide occupies residues 1–20 (KTLLLTLVVVTIICLDFGYT). 5 disulfide bridges follow: cysteine 23/cysteine 41, cysteine 34/cysteine 62, cysteine 47/cysteine 51, cysteine 66/cysteine 77, and cysteine 78/cysteine 83.

It belongs to the three-finger toxin family. Long-chain subfamily. Type II alpha-neurotoxin sub-subfamily. In terms of tissue distribution, expressed by the venom gland.

The protein localises to the secreted. Functionally, binds with high affinity to muscular (alpha-1/CHRNA1) and neuronal (alpha-7/CHRNA7) nicotinic acetylcholine receptor (nAChR) and inhibits acetylcholine from binding to the receptor, thereby impairing neuromuscular and neuronal transmission. The protein is Long neurotoxin LlLong of Laticauda laticaudata (Blue-ringed sea krait).